A 200-amino-acid polypeptide reads, in one-letter code: Urease accessory protein UreG (200 aa).

8-15 (GPVGSGKT) lines the GTP pocket.

It belongs to the SIMIBI class G3E GTPase family. UreG subfamily. As to quaternary structure, homodimer. UreH, UreF and UreG form a complex that acts as a GTP-hydrolysis-dependent molecular chaperone, activating the urease apoprotein by helping to assemble the nickel containing metallocenter of UreC. The UreE protein probably delivers the nickel.

It is found in the cytoplasm. Its function is as follows. Facilitates the functional incorporation of the urease nickel metallocenter. This process requires GTP hydrolysis, probably effectuated by UreG. This chain is Urease accessory protein UreG, found in Helicobacter hepaticus (strain ATCC 51449 / 3B1).